The sequence spans 143 residues: Cofilin (143 aa).

The ADF-H domain maps to 5 to 137 (GVAVADESLN…AYESVLEKVS (133 aa)).

The protein belongs to the actin-binding proteins ADF family.

It is found in the cytoplasm. Its subcellular location is the cytoskeleton. The protein localises to the nucleus matrix. Functionally, controls reversibly actin polymerization and depolymerization in a pH-sensitive manner. It has the ability to bind G- and F-actin in a 1:1 ratio of cofilin to actin. Binding to F-actin is regulated by tropomyosin. It is the major component of intranuclear and cytoplasmic actin rods. Required for accumulation of actin at the cell division site via depolymerizing actin at the cell ends. In association with myosin II has a role in the assembly of the contractile ring via severing actin filaments. Involved in the maintenance of the contractile ring once formed. In association with profilin and capping protein, has a role in the mitotic reorganization of the actin cytoskeleton. In Kluyveromyces lactis (strain ATCC 8585 / CBS 2359 / DSM 70799 / NBRC 1267 / NRRL Y-1140 / WM37) (Yeast), this protein is Cofilin (COF1).